The sequence spans 574 residues: Iron hydrogenase 1 (574 aa).

The 2Fe-2S ferredoxin-type domain occupies 1 to 78; the sequence is MKTIIINGVQ…GMIINTNSDA (78 aa). The [2Fe-2S] cluster site is built by cysteine 34, cysteine 46, cysteine 49, and cysteine 62. The region spanning 78–117 is the 4Fe-4S His(Cys)3-ligated-type domain; it reads AVNEKIKSRISQLLDIHEFKCGPCNRRENCEFLKLVIKYK. [4Fe-4S] cluster is bound by residues histidine 94, cysteine 98, cysteine 101, cysteine 107, cysteine 147, cysteine 150, cysteine 153, cysteine 157, cysteine 190, cysteine 193, cysteine 196, cysteine 200, cysteine 300, cysteine 355, cysteine 499, and cysteine 503. 4Fe-4S ferredoxin-type domains are found at residues 138–167 and 181–210; these read KSLTVDRTKCLLCGRCVNACGKNTETYAMK and DEKCFDDTNCLLCGQCIIACPVAALSEKSH. Cysteine 503 is a Fe(2+) binding site.

In terms of assembly, monomer. The cofactor is [2Fe-2S] cluster. It depends on [4Fe-4S] cluster as a cofactor. Requires Fe(2+) as cofactor.

It carries out the reaction H2 + 2 oxidized [2Fe-2S]-[ferredoxin] = 2 reduced [2Fe-2S]-[ferredoxin] + 2 H(+). The polypeptide is Iron hydrogenase 1 (Clostridium pasteurianum).